Consider the following 85-residue polypeptide: Protein MANBAL (85 aa).

A helical transmembrane segment spans residues 24 to 44 (YGLFLGAIFQLICVLAIIVPI). A compositionally biased stretch (basic and acidic residues) spans 49-64 (EAEAEQAEPRSAEGPK). A disordered region spans residues 49–85 (EAEAEQAEPRSAEGPKKPKAAIASTNKRPKKETKKKR). Residues 75 to 85 (KRPKKETKKKR) are compositionally biased toward basic residues.

It belongs to the UPF0239 family.

Its subcellular location is the membrane. The chain is Protein MANBAL (Manbal) from Mus musculus (Mouse).